A 239-amino-acid chain; its full sequence is Serine protease SplD (239 aa).

An N-terminal signal peptide occupies residues 1 to 36; it reads MNKNIIIKSIAALTILTSITGVGTTVVDGIQQTAKA. Catalysis depends on charge relay system residues His-75, Asp-114, and Ser-192.

This sequence belongs to the peptidase S1B family.

Its subcellular location is the secreted. The chain is Serine protease SplD (splD) from Staphylococcus aureus (strain Mu3 / ATCC 700698).